Reading from the N-terminus, the 225-residue chain is MPNNAQAFVNVQTTVIPKTAFTAHDFVNYTLPKDKKKQNDTENKKKQPKDGENDKQKEQAETQPFEWIQQKDADDKKESNTANTSDSLAYADFAVLELTLFLDNPVDKKVFDHFIQPAIKTYEQLGNSLKLFAKPTLTELKNHRYYLSGYPFLENKVNVLSVNQIKKDTSTETTINGQTVQQSNHEQPLIVRSTIAKPTLIRNQGDDFNGSNWVWNYDNSRVFRF.

The tract at residues 32 to 82 (PKDKKKQNDTENKKKQPKDGENDKQKEQAETQPFEWIQQKDADDKKESNTA) is disordered. Basic and acidic residues-rich tracts occupy residues 37–60 (KQND…KEQA) and 69–79 (QQKDADDKKES).

Belongs to the MG067/MG068/MG395 family.

This is an uncharacterized protein from Mycoplasma pneumoniae (strain ATCC 29342 / M129 / Subtype 1) (Mycoplasmoides pneumoniae).